The sequence spans 250 residues: MEIDLNADLGEGCGSDEALLDLVSSANIACGWHAGGANAMRDCVRWAVQKGVSIGAHPSFNDPENFGRKEMDLPANDIYAGVLYQLGALSAIAQAEGGRVAHVKPHGALYNQAARDSRIADAIVSAVHDFDPSVAVFALANSGLVTAARNVGLIAVEEVFADRGYRADGSLVPRKEPGALLDDEDKVLARTLSMIREQRVQAVDGQWVPLNAQTICLHGDGPHALAFARRIRGALQDAGIEVHAAGAARA.

This sequence belongs to the LamB/PxpA family. As to quaternary structure, forms a complex composed of PxpA, PxpB and PxpC.

It carries out the reaction 5-oxo-L-proline + ATP + 2 H2O = L-glutamate + ADP + phosphate + H(+). Its function is as follows. Catalyzes the cleavage of 5-oxoproline to form L-glutamate coupled to the hydrolysis of ATP to ADP and inorganic phosphate. This chain is 5-oxoprolinase subunit A, found in Paraburkholderia xenovorans (strain LB400).